Reading from the N-terminus, the 741-residue chain is MEHTYQYAWIIPFVPLPVPIAIGVGLLLVPTATKSLRRMWAFLSVLLLSIIMIFSADLSIQQIKGSLIHQYVWSWTINNDFSLEFGYLIDPLTSIMLILITTVGIMVLIYSDNYMSHDQGYLRFFAYMSFSNASMLGLVTSCNLIQIYIFWELVGMCSYLLIGFWFTRPIAASACQKAFVTNRVGDFGLLLGILGFYFITGSFEFRDLFEITNNLMDNGGVNSLFLTLCASLLFVGAIAKSAQFPLHVWLPDAMEGPTPISALIHAATMVAAGIFLVARLLPLFTVIPYVMNFISLIGIITILLGATLALAQRDIKRSLAYSTMSQLGYTMLALGMGSYRAALFHLITHAYSKALLFLGSGSIIHSMETVIGYSPEKSQNMVLMGGLTKYVPITKTAFLLGTLSLCGIPPLACFWSKDEILNDSWLYSPIFAIIACFTAGLTAFYMFRMYLLTFEGHLNAHFQNYSGKKNSSFYSISIWGKEGAKAIKQNSVLSTMNNNESAYLFSKKTYPIDGNVRNMMRSLITITNFSNKKTSPYPHESDNTMLLPLLILVLFTLFVGFIGIPFDQGGIDFDILSKLLTPSINLLHSNSNNSVDWYEFVTNAFFSVSIAYSGIFIASLLYRPVYSSFQNLDLINSFVKMSPKRIFWDKIINVIYNWSYNRGYIDVFYTTTFTRGIRGVAELIYFFDRQVIDGITNGVGITSFFVGEGIKYVGGGRISSYLFLYLFYVSIFLLIYYFFNL.

Helical transmembrane passes span 9-29 (WIIP…LLLV), 40-60 (WAFL…DLSI), 89-109 (IDPL…MVLI), 125-145 (FAYM…CNLI), 147-167 (IYIF…FWFT), 185-205 (GDFG…SFEF), 219-239 (GGVN…GAIA), 258-278 (TPIS…FLVA), 283-303 (LFTV…ITIL), 327-347 (LGYT…FHLI), 354-374 (ALLF…IGYS), 396-416 (TAFL…CFWS), 425-445 (WLYS…TAFY), 546-566 (LLPL…GIPF), 600-620 (FVTN…IASL), and 721-741 (YLFL…FFNL).

This sequence belongs to the complex I subunit 5 family. As to quaternary structure, NDH is composed of at least 16 different subunits, 5 of which are encoded in the nucleus.

It localises to the plastid. The protein localises to the chloroplast thylakoid membrane. It catalyses the reaction a plastoquinone + NADH + (n+1) H(+)(in) = a plastoquinol + NAD(+) + n H(+)(out). The catalysed reaction is a plastoquinone + NADPH + (n+1) H(+)(in) = a plastoquinol + NADP(+) + n H(+)(out). Its function is as follows. NDH shuttles electrons from NAD(P)H:plastoquinone, via FMN and iron-sulfur (Fe-S) centers, to quinones in the photosynthetic chain and possibly in a chloroplast respiratory chain. The immediate electron acceptor for the enzyme in this species is believed to be plastoquinone. Couples the redox reaction to proton translocation, and thus conserves the redox energy in a proton gradient. The protein is NAD(P)H-quinone oxidoreductase subunit 5, chloroplastic (ndhF) of Nandina domestica (Heavenly bamboo).